Here is a 346-residue protein sequence, read N- to C-terminus: 36.4 kDa proline-rich protein (346 aa).

A disordered region spans residues 11–144; it reads PYPPSTPKHP…PFTPKPPSPI (134 aa). Composition is skewed to pro residues over residues 25 to 42, 51 to 81, and 89 to 144; these read KVKP…PSTP, VKPP…PSTP, and QKPC…PSPI.

This is 36.4 kDa proline-rich protein (TPRP-F1) from Solanum lycopersicum (Tomato).